A 226-amino-acid chain; its full sequence is ATP synthase F(0) complex subunit a (226 aa).

A run of 6 helical transmembrane segments spans residues 12-32 (PTMM…ILFP), 68-88 (WTLM…LGLL), 97-117 (QLSM…FMGF), 135-155 (IFLI…QPMA), 164-184 (ITAG…LMDI), and 189-209 (ALIT…VAMI).

This sequence belongs to the ATPase A chain family. Component of the ATP synthase complex composed at least of ATP5F1A/subunit alpha, ATP5F1B/subunit beta, ATP5MC1/subunit c (homooctomer), MT-ATP6/subunit a, MT-ATP8/subunit 8, ATP5ME/subunit e, ATP5MF/subunit f, ATP5MG/subunit g, ATP5MK/subunit k, ATP5MJ/subunit j, ATP5F1C/subunit gamma, ATP5F1D/subunit delta, ATP5F1E/subunit epsilon, ATP5PF/subunit F6, ATP5PB/subunit b, ATP5PD/subunit d, ATP5PO/subunit OSCP. ATP synthase complex consists of a soluble F(1) head domain (subunits alpha(3) and beta(3)) - the catalytic core - and a membrane F(0) domain - the membrane proton channel (subunits c, a, 8, e, f, g, k and j). These two domains are linked by a central stalk (subunits gamma, delta, and epsilon) rotating inside the F1 region and a stationary peripheral stalk (subunits F6, b, d, and OSCP). Interacts with DNAJC30; interaction is direct.

It is found in the mitochondrion inner membrane. It carries out the reaction H(+)(in) = H(+)(out). Functionally, subunit a, of the mitochondrial membrane ATP synthase complex (F(1)F(0) ATP synthase or Complex V) that produces ATP from ADP in the presence of a proton gradient across the membrane which is generated by electron transport complexes of the respiratory chain. ATP synthase complex consist of a soluble F(1) head domain - the catalytic core - and a membrane F(1) domain - the membrane proton channel. These two domains are linked by a central stalk rotating inside the F(1) region and a stationary peripheral stalk. During catalysis, ATP synthesis in the catalytic domain of F(1) is coupled via a rotary mechanism of the central stalk subunits to proton translocation. With the subunit c (ATP5MC1), forms the proton-conducting channel in the F(0) domain, that contains two crucial half-channels (inlet and outlet) that facilitate proton movement from the mitochondrial intermembrane space (IMS) into the matrix. Protons are taken up via the inlet half-channel and released through the outlet half-channel, following a Grotthuss mechanism. The protein is ATP synthase F(0) complex subunit a of Equus asinus (Donkey).